A 364-amino-acid chain; its full sequence is Tripartite motif-containing protein 54 (364 aa).

The segment at 26–82 adopts an RING-type zinc-finger fold; sequence CPICLEMFSKPVVILPCQHNLCRKCANDVFQASNPLWQSRGSTTVSSGGRFRCPSCR. The segment at 121-163 adopts a B box-type zinc-finger fold; that stretch reads EQHLMCEEHEDEKINIYCLSCEVPTCSLCKVFGAHKDCEVAPL. Zn(2+)-binding residues include C126, H129, C149, and H155. The tract at residues 168-211 is mediates microtubule-binding and homooligomerization; the sequence is KRQKSELSDGIAMLVAGNDRVQAVITQMEEVCQTIEDNSRRQKQ. The stretch at 194–252 forms a coiled coil; sequence QMEEVCQTIEDNSRRQKQLLNQKFETLCAVLEERKGELLQALARVQEEKLQRVRSLIRQ. The region spanning 271–329 is the COS domain; sequence MEEPQMALYLQQAKELINKVGAMSKVELAGRPEPGYESMEQFSVIVEHVAEMLRTIDFQ. A disordered region spans residues 328 to 364; sequence FQPGASGDEEDDEVTLDGEEGNTGLEEERLDGPEGLH. A compositionally biased stretch (acidic residues) spans 334–347; sequence GDEEDDEVTLDGEE. Positions 353–364 are enriched in basic and acidic residues; the sequence is EEERLDGPEGLH.

As to quaternary structure, homooligomer and heterooligomer. Interacts with TRIM63 and probably with TRIM55. Interacts with tubulin.

It localises to the cytoplasm. The protein resides in the cytoskeleton. The protein localises to the myofibril. Its subcellular location is the sarcomere. It is found in the z line. May bind and stabilize microtubules during myotubes formation. This is Tripartite motif-containing protein 54 (Trim54) from Rattus norvegicus (Rat).